We begin with the raw amino-acid sequence, 114 residues long: Aspartate 1-decarboxylase (114 aa).

S25 serves as the catalytic Schiff-base intermediate with substrate; via pyruvic acid. S25 carries the post-translational modification Pyruvic acid (Ser). Residue T57 coordinates substrate. Y58 (proton donor) is an active-site residue. 71 to 73 (GAA) is a substrate binding site.

The protein belongs to the PanD family. As to quaternary structure, heterooctamer of four alpha and four beta subunits. The cofactor is pyruvate. Post-translationally, is synthesized initially as an inactive proenzyme, which is activated by self-cleavage at a specific serine bond to produce a beta-subunit with a hydroxyl group at its C-terminus and an alpha-subunit with a pyruvoyl group at its N-terminus.

It is found in the cytoplasm. It carries out the reaction L-aspartate + H(+) = beta-alanine + CO2. The protein operates within cofactor biosynthesis; (R)-pantothenate biosynthesis; beta-alanine from L-aspartate: step 1/1. Its function is as follows. Catalyzes the pyruvoyl-dependent decarboxylation of aspartate to produce beta-alanine. The protein is Aspartate 1-decarboxylase of Campylobacter hominis (strain ATCC BAA-381 / DSM 21671 / CCUG 45161 / LMG 19568 / NCTC 13146 / CH001A).